A 698-amino-acid chain; its full sequence is MOXD1 homolog 1 (698 aa).

A signal peptide spans 1–20 (MSVQDVLWIVLTVQLSFGLA). N-linked (GlcNAc...) asparagine glycans are attached at residues N36, N140, and N221. The DOMON domain maps to 54 to 174 (GLYWLKWWIN…DTFKVLWSIG (121 aa)). Y232 is a catalytic residue. Residues H265 and H266 each coordinate Cu cation. An intrachain disulfide couples C272 to C309. Cu cation is bound by residues H347, H425, and H427. 2 cysteine pairs are disulfide-bonded: C403–C516 and C479–C501. Residue H425 is part of the active site. N-linked (GlcNAc...) asparagine glycosylation occurs at N465. Cu cation is bound at residue M500. Residues N538 and N561 are each glycosylated (N-linked (GlcNAc...) asparagine).

The protein belongs to the copper type II ascorbate-dependent monooxygenase family. Cu(2+) serves as cofactor.

Its subcellular location is the secreted. This is MOXD1 homolog 1 from Drosophila melanogaster (Fruit fly).